A 145-amino-acid chain; its full sequence is uncharacterized protein (145 aa).

Disordered regions lie at residues 1 to 41 (MRRL…PPGT) and 122 to 145 (RLPSLVHGPSHPDSQHPREVPLAL). Residues 20-34 (GGPQNGTSGCTTAPQ) are compositionally biased toward polar residues. The span at 134–145 (DSQHPREVPLAL) shows a compositional bias: basic and acidic residues.

As to expression, ubiquitous.

This is an uncharacterized protein from Homo sapiens (Human).